The chain runs to 353 residues: Lipase chaperone (353 aa).

Residues 12-32 (IVLYLILGCVVVCGVWYSFDV) form a helical membrane-spanning segment.

This sequence belongs to the lipase chaperone family.

Its subcellular location is the cell inner membrane. In terms of biological role, may be involved in the folding of the extracellular lipase during its passage through the periplasm. The polypeptide is Lipase chaperone (Xylella fastidiosa (strain M23)).